The following is a 972-amino-acid chain: MGSYLGKAGSSPRSPAQGRADSGEKPASRRPARPLYQVHRVQHVHRAQPARRHRPARRPPNWDPANPTAFVSEAWRRFPMKRPQNPIMGSLPSDWWESYLKRNIWSLRHPRATWSPVTVKISPPERRPRPLFPVSRVVNSAGPSEEPPGPCGKDPVLRALLQCRKGRARWEEPLFPDTSDSQRHSASVWSAFKPLLKSGATVSFVARPGSLKRRPHVQSSDDKCKRSGCFSGALVASIHTQGPPSTKRNAITSSYSSSRELSGSWKRHFLRTLVQTPEWPLKKAGESPNSHLSVTPSSSGQLNGEIPLLQSGPRDLLTIPCQQGPVVTEEDPTLEGQAVPSNQTTEATTGTAGDSIPEMRAGIQPTLSLSRSSSERVLSTHVNPQLESLKNMPAPLGCSQLEHIQGISSDSNPSIASTQASPSSPTTPVTDSTWLSSIPRAHRSAVPPHSSVINPTAPTTQSTLVGVVSNPILHLPASVLPVETSSHLALRPIWGPVHSTEVRTASYSRISVMAEASSSSSPSTTPGILRPTFKPIFGSIEPLQTMSETAPVHTRQPSSSLSSDSTHLFHSLATTAPCVVTSVIPASKSKDPGVDLNIVTSTTGNSCSVPSCSTFLLGASQNFPSATDLIFPSQHPTIPTVHTVTIFSQVLTSAIKISPLRSTDTLKGVSNPLATLGLSSTNQPPVTSSNSNVTSALTSSLGSSPKPLLPPSQRNTSQSSPGAIDGLKQSSLQLAPAQSFSTSFLSENSGVSPTPSAQLVLSKTTQPACGQLTSSAPIIHTPATSQTGFGSTLAGFPFGKASSTALRVIRQNHQSVTYSSVFGSTAPRPFAFGGLVMPMDCGEPEVIVAAPKRSTSGTRQSMTPSTLAPFVQCWNQSMQGPPNQITPLAGIPARKIMSGAPSLVPFAQSIPVPGAIKAGSSLGFGMSSPTVQGSVGRNPLRSLEPSFCIGTKSKTLRNREPGRSRKHHTYKK.

6 disordered regions span residues 1-67 (MGSY…PANP), 281-302 (LKKA…SGQL), 328-359 (TEED…IPEM), 406-431 (GISS…PVTD), 676-726 (LGLS…AIDG), and 953-972 (SKTL…TYKK). Positions 40 to 57 (RVQHVHRAQPARRHRPAR) are enriched in basic residues. 2 stretches are compositionally biased toward polar residues: residues 287-302 (SPNS…SGQL) and 339-352 (VPSN…TGTA). The segment covering 413 to 431 (PSIASTQASPSSPTTPVTD) has biased composition (low complexity). The span at 677–696 (GLSSTNQPPVTSSNSNVTSA) shows a compositional bias: polar residues. Low complexity predominate over residues 697-706 (LTSSLGSSPK).

This sequence belongs to the POM121 family.

This chain is POM121-like protein 2 (Pom121l2), found in Mus musculus (Mouse).